A 359-amino-acid chain; its full sequence is 5-amino-6-(D-ribitylamino)uracil--L-tyrosine 4-hydroxyphenyl transferase (359 aa).

The Radical SAM core domain maps to 45–282; sequence VTYVLNANIN…VYAISRIFFK (238 aa). Residues Cys-59, Cys-63, and Cys-66 each contribute to the [4Fe-4S] cluster site.

The protein belongs to the radical SAM superfamily. CofH family. In terms of assembly, consists of two subunits, CofG and CofH. [4Fe-4S] cluster serves as cofactor.

It catalyses the reaction 5-amino-6-(D-ribitylamino)uracil + L-tyrosine + S-adenosyl-L-methionine = 5-amino-5-(4-hydroxybenzyl)-6-(D-ribitylimino)-5,6-dihydrouracil + 2-iminoacetate + 5'-deoxyadenosine + L-methionine + H(+). It participates in cofactor biosynthesis; coenzyme F0 biosynthesis. Functionally, catalyzes the radical-mediated synthesis of 5-amino-5-(4-hydroxybenzyl)-6-(D-ribitylimino)-5,6-dihydrouracil from 5-amino-6-(D-ribitylamino)uracil and L-tyrosine. The polypeptide is 5-amino-6-(D-ribitylamino)uracil--L-tyrosine 4-hydroxyphenyl transferase (Methanococcus vannielii (strain ATCC 35089 / DSM 1224 / JCM 13029 / OCM 148 / SB)).